A 411-amino-acid chain; its full sequence is Putative competence-damage inducible protein (411 aa).

This sequence belongs to the CinA family.

In Caldicellulosiruptor saccharolyticus (strain ATCC 43494 / DSM 8903 / Tp8T 6331), this protein is Putative competence-damage inducible protein.